Consider the following 446-residue polypeptide: Tubulin beta-6 chain (446 aa).

An MREI motif motif is present at residues 1 to 4 (MREI). Residues Gln11, Glu69, Ser138, Gly142, Thr143, and Gly144 each contribute to the GTP site. Glu69 is a Mg(2+) binding site. Position 172 is a phosphoserine; by CDK1 (Ser172). Residues Asn204 and Asn226 each coordinate GTP. Glu438 is modified (5-glutamyl polyglutamate).

It belongs to the tubulin family. As to quaternary structure, dimer of alpha and beta chains. A typical microtubule is a hollow water-filled tube with an outer diameter of 25 nm and an inner diameter of 15 nM. Alpha-beta heterodimers associate head-to-tail to form protofilaments running lengthwise along the microtubule wall with the beta-tubulin subunit facing the microtubule plus end conferring a structural polarity. Microtubules usually have 13 protofilaments but different protofilament numbers can be found in some organisms and specialized cells. The cofactor is Mg(2+). Post-translationally, some glutamate residues at the C-terminus are polyglutamylated, resulting in polyglutamate chains on the gamma-carboxyl group. Polyglutamylation plays a key role in microtubule severing by spastin (SPAST). SPAST preferentially recognizes and acts on microtubules decorated with short polyglutamate tails: severing activity by SPAST increases as the number of glutamates per tubulin rises from one to eight, but decreases beyond this glutamylation threshold. Glutamylation is also involved in cilia motility. In terms of processing, some glutamate residues at the C-terminus are monoglycylated but not polyglycylated due to the absence of functional TTLL10 in human. Monoglycylation is mainly limited to tubulin incorporated into cilia and flagella axonemes, which is required for their stability and maintenance. Flagella glycylation controls sperm motility. Both polyglutamylation and monoglycylation can coexist on the same protein on adjacent residues, and lowering glycylation levels increases polyglutamylation, and reciprocally. Phosphorylated on Ser-172 by CDK1 during the cell cycle, from metaphase to telophase, but not in interphase. This phosphorylation inhibits tubulin incorporation into microtubules. In terms of tissue distribution, ubiquitous. Maximal expression in breast and lung, where it represents around 10% of all beta-tubulins. Largely decreased expression in most cancerous tissues.

The protein localises to the cytoplasm. Its subcellular location is the cytoskeleton. Tubulin is the major constituent of microtubules, a cylinder consisting of laterally associated linear protofilaments composed of alpha- and beta-tubulin heterodimers. Microtubules grow by the addition of GTP-tubulin dimers to the microtubule end, where a stabilizing cap forms. Below the cap, tubulin dimers are in GDP-bound state, owing to GTPase activity of alpha-tubulin. This chain is Tubulin beta-6 chain (TUBB6), found in Homo sapiens (Human).